The sequence spans 142 residues: MFGVAKRFWIPMVIVIVVAVAAVTVSRLHSVFGSHQHAPDTGNLDPIIAFYPKHVLYEVFGPPGTVASINYLDADAQPHEVVNAAVPWSFTIVTTLTAVVANVVARGDGASLGCRITVNEVIREERIVNAYHAHTSCLVKSA.

A run of 2 helical transmembrane segments spans residues Phe8–Leu28 and Val81–Ala101.

The protein belongs to the MmpS family.

The protein localises to the cell membrane. This chain is Probable transport accessory protein MmpS1 (mmpS1), found in Mycobacterium bovis (strain ATCC BAA-935 / AF2122/97).